The primary structure comprises 361 residues: Inactive 2'-5'-oligoadenylate synthase 1D (361 aa).

Belongs to the 2-5A synthase family. Interacts with OAS1A, the interaction inhibits OAS1A catalytic activity. As to expression, expressed specifically in oocytes (at protein level). Expressed at highest level in ovary with lesser amounts in intestine, brain, thymus lung, kidney, liver and uterus.

It is found in the cytoplasm. Does not have 2'-5'-oligoadenylate synthetase activity, but can bind double-stranded RNA. May play a role in the control of female fertility, possibly by binding to and inhibiting OAS1A. The chain is Inactive 2'-5'-oligoadenylate synthase 1D from Mus musculus (Mouse).